The chain runs to 183 residues: MINVEIIKNYSKWREHKQINKALIKKITQKTLSQFDNFSEIKQFELSILLTNNEEILTLNKQFRNIEKATNVLSFPANELNWQDLRFSGNEIASSNKPIILENLGDSDYMHLGDIAFCHDVIYNESYEQQKTFENHFIHLLIHSILHLIGFDHQNDTETKIMENLEIEILAHFGISSPYLLIK.

3 residues coordinate Zn(2+): histidine 143, histidine 147, and histidine 153.

Belongs to the endoribonuclease YbeY family. Requires Zn(2+) as cofactor.

Its subcellular location is the cytoplasm. Its function is as follows. Single strand-specific metallo-endoribonuclease involved in late-stage 70S ribosome quality control and in maturation of the 3' terminus of the 16S rRNA. The protein is Endoribonuclease YbeY of Rickettsia bellii (strain RML369-C).